A 493-amino-acid chain; its full sequence is 1-aminocyclopropane-1-carboxylate synthase CMW33 (493 aa).

At K279 the chain carries N6-(pyridoxal phosphate)lysine.

It belongs to the class-I pyridoxal-phosphate-dependent aminotransferase family. As to quaternary structure, homodimer. Requires pyridoxal 5'-phosphate as cofactor.

It catalyses the reaction S-adenosyl-L-methionine = 1-aminocyclopropane-1-carboxylate + S-methyl-5'-thioadenosine + H(+). Its pathway is alkene biosynthesis; ethylene biosynthesis via S-adenosyl-L-methionine; ethylene from S-adenosyl-L-methionine: step 1/2. In terms of biological role, catalyzes the formation of 1-aminocyclopropane-1-carboxylate, a direct precursor of ethylene in higher plants. The protein is 1-aminocyclopropane-1-carboxylate synthase CMW33 (ACS1) of Cucurbita maxima (Pumpkin).